We begin with the raw amino-acid sequence, 126 residues long: MPTMNQLVRKGRESKRRTKRTRALNKCPQKQGVCLRVSTRSPKKPNSALRKIAKVRLTNRNEIIAYIPGEGHNLQEHSVVMVRGGRVQDLPGVKYHCIRGVKDLQGIPGRRRGRSKYGTKKPKDYI.

2 disordered regions span residues 1 to 27 (MPTM…LNKC) and 106 to 126 (GIPG…KDYI). Basic residues-rich tracts occupy residues 12–23 (RESKRRTKRTRA) and 109–120 (GRRRGRSKYGTK).

It belongs to the universal ribosomal protein uS12 family.

It localises to the mitochondrion. Protein S12 is involved in the translation initiation step. The protein is Small ribosomal subunit protein uS12m (RPS12) of Marchantia polymorpha (Common liverwort).